Reading from the N-terminus, the 149-residue chain is MFCPFCSEQETKVIDSRLVAEGQQVRRRRECMVCHERFTTFESAELVMPRVIKRDGSREPFNEDKLRAGLQRALEKRPVSTEKVEQCILSLKSQLRATGEREVSSELLGNLIMKALKELDKVAYVRFASVYRSFEDIREFGEEIARLGD.

The segment at 3–34 (CPFCSEQETKVIDSRLVAEGQQVRRRRECMVC) is a zinc-finger region. One can recognise an ATP-cone domain in the interval 49–139 (PRVIKRDGSR…VYRSFEDIRE (91 aa)).

This sequence belongs to the NrdR family. Requires Zn(2+) as cofactor.

Functionally, negatively regulates transcription of bacterial ribonucleotide reductase nrd genes and operons by binding to NrdR-boxes. The polypeptide is Transcriptional repressor NrdR (Alteromonas mediterranea (strain DSM 17117 / CIP 110805 / LMG 28347 / Deep ecotype)).